We begin with the raw amino-acid sequence, 345 residues long: Protein RecA (345 aa).

An ATP-binding site is contributed by 63–70 (GPESSGKT). The disordered stretch occupies residues 326 to 345 (VLSDALMTDPEPDADGTPED). Positions 335-345 (PEPDADGTPED) are enriched in acidic residues.

The protein belongs to the RecA family.

It localises to the cytoplasm. Functionally, can catalyze the hydrolysis of ATP in the presence of single-stranded DNA, the ATP-dependent uptake of single-stranded DNA by duplex DNA, and the ATP-dependent hybridization of homologous single-stranded DNAs. It interacts with LexA causing its activation and leading to its autocatalytic cleavage. The chain is Protein RecA from Gluconobacter oxydans (strain 621H) (Gluconobacter suboxydans).